We begin with the raw amino-acid sequence, 264 residues long: NADH-quinone oxidoreductase subunit I 2 (264 aa).

4Fe-4S ferredoxin-type domains are found at residues 57-86 (GFLE…ISLE) and 98-127 (TQFD…HTRE). Residues Cys66, Cys69, Cys72, Cys76, Cys107, Cys110, Cys113, and Cys117 each contribute to the [4Fe-4S] cluster site. The segment at 183–264 (APQFLPPEPP…AAPAANPESK (82 aa)) is disordered. Over residues 197-264 (AKPAAKAAPA…AAPAANPESK (68 aa)) the composition is skewed to low complexity.

This sequence belongs to the complex I 23 kDa subunit family. NDH-1 is composed of 14 different subunits. Subunits NuoA, H, J, K, L, M, N constitute the membrane sector of the complex. It depends on [4Fe-4S] cluster as a cofactor.

Its subcellular location is the cell inner membrane. The enzyme catalyses a quinone + NADH + 5 H(+)(in) = a quinol + NAD(+) + 4 H(+)(out). Its function is as follows. NDH-1 shuttles electrons from NADH, via FMN and iron-sulfur (Fe-S) centers, to quinones in the respiratory chain. The immediate electron acceptor for the enzyme in this species is believed to be ubiquinone. Couples the redox reaction to proton translocation (for every two electrons transferred, four hydrogen ions are translocated across the cytoplasmic membrane), and thus conserves the redox energy in a proton gradient. In Anaeromyxobacter dehalogenans (strain 2CP-C), this protein is NADH-quinone oxidoreductase subunit I 2.